A 205-amino-acid polypeptide reads, in one-letter code: ATP-dependent Clp protease proteolytic subunit (205 aa).

Ser98 serves as the catalytic Nucleophile. His123 is a catalytic residue.

The protein belongs to the peptidase S14 family. As to quaternary structure, fourteen ClpP subunits assemble into 2 heptameric rings which stack back to back to give a disk-like structure with a central cavity, resembling the structure of eukaryotic proteasomes.

Its subcellular location is the cytoplasm. It carries out the reaction Hydrolysis of proteins to small peptides in the presence of ATP and magnesium. alpha-casein is the usual test substrate. In the absence of ATP, only oligopeptides shorter than five residues are hydrolyzed (such as succinyl-Leu-Tyr-|-NHMec, and Leu-Tyr-Leu-|-Tyr-Trp, in which cleavage of the -Tyr-|-Leu- and -Tyr-|-Trp bonds also occurs).. In terms of biological role, cleaves peptides in various proteins in a process that requires ATP hydrolysis. Has a chymotrypsin-like activity. Plays a major role in the degradation of misfolded proteins. The polypeptide is ATP-dependent Clp protease proteolytic subunit (Desulfosudis oleivorans (strain DSM 6200 / JCM 39069 / Hxd3) (Desulfococcus oleovorans)).